The primary structure comprises 267 residues: Glucosamine-6-phosphate deaminase (267 aa).

The active-site Proton acceptor; for enolization step is the Asp72. Asp141 functions as the For ring-opening step in the catalytic mechanism. The active-site Proton acceptor; for ring-opening step is His143. Glu148 serves as the catalytic For ring-opening step.

The protein belongs to the glucosamine/galactosamine-6-phosphate isomerase family. NagB subfamily. In terms of assembly, homohexamer.

It carries out the reaction alpha-D-glucosamine 6-phosphate + H2O = beta-D-fructose 6-phosphate + NH4(+). It functions in the pathway amino-sugar metabolism; N-acetylneuraminate degradation; D-fructose 6-phosphate from N-acetylneuraminate: step 5/5. Allosterically activated by N-acetylglucosamine 6-phosphate (GlcNAc6P). Its function is as follows. Catalyzes the reversible isomerization-deamination of glucosamine 6-phosphate (GlcN6P) to form fructose 6-phosphate (Fru6P) and ammonium ion. This Pasteurella multocida (strain Pm70) protein is Glucosamine-6-phosphate deaminase.